The sequence spans 202 residues: Glycerol-3-phosphate acyltransferase (202 aa).

5 helical membrane-spanning segments follow: residues 6–26, 56–76, 82–102, 118–138, and 141–161; these read LTLG…AVLV, SAAL…YIAF, SVSL…PIFF, APIG…MVLI, and YSSL…WYLD.

Belongs to the PlsY family. In terms of assembly, probably interacts with PlsX.

It is found in the cell inner membrane. It carries out the reaction an acyl phosphate + sn-glycerol 3-phosphate = a 1-acyl-sn-glycero-3-phosphate + phosphate. It participates in lipid metabolism; phospholipid metabolism. Catalyzes the transfer of an acyl group from acyl-phosphate (acyl-PO(4)) to glycerol-3-phosphate (G3P) to form lysophosphatidic acid (LPA). This enzyme utilizes acyl-phosphate as fatty acyl donor, but not acyl-CoA or acyl-ACP. The sequence is that of Glycerol-3-phosphate acyltransferase from Shewanella woodyi (strain ATCC 51908 / MS32).